The following is a 621-amino-acid chain: tRNA 5-methylaminomethyl-2-thiouridine biosynthesis bifunctional protein MnmC (621 aa).

Positions Met-1–Glu-222 are tRNA (mnm(5)s(2)U34)-methyltransferase. The segment at Ile-250–Lys-621 is FAD-dependent cmnm(5)s(2)U34 oxidoreductase.

In the N-terminal section; belongs to the methyltransferase superfamily. tRNA (mnm(5)s(2)U34)-methyltransferase family. It in the C-terminal section; belongs to the DAO family. FAD serves as cofactor.

Its subcellular location is the cytoplasm. It catalyses the reaction 5-aminomethyl-2-thiouridine(34) in tRNA + S-adenosyl-L-methionine = 5-methylaminomethyl-2-thiouridine(34) in tRNA + S-adenosyl-L-homocysteine + H(+). Its function is as follows. Catalyzes the last two steps in the biosynthesis of 5-methylaminomethyl-2-thiouridine (mnm(5)s(2)U) at the wobble position (U34) in tRNA. Catalyzes the FAD-dependent demodification of cmnm(5)s(2)U34 to nm(5)s(2)U34, followed by the transfer of a methyl group from S-adenosyl-L-methionine to nm(5)s(2)U34, to form mnm(5)s(2)U34. The polypeptide is tRNA 5-methylaminomethyl-2-thiouridine biosynthesis bifunctional protein MnmC (Campylobacter concisus (strain 13826)).